The sequence spans 251 residues: Cytochrome c oxidase subunit 2 (251 aa).

An N-terminal signal peptide occupies residues 1 to 15 (MLTFLSNLNNMIIMN). Residues 16–42 (DVPTPYGVYFQDSATPNQEGILELHDN) lie on the Mitochondrial intermembrane side of the membrane. Residues 43 to 64 (IMFYLLVILGLVSWLLFTITRT) traverse the membrane as a helical segment. The Mitochondrial matrix portion of the chain corresponds to 65–82 (YSKNPIAYKYIKHGQTIE). A helical transmembrane segment spans residues 83–107 (IIWTIFPAVVLLIIAFPSFILLYLC). Residues 108–251 (DEVISPAMTI…PSFLEWLNEQ (144 aa)) lie on the Mitochondrial intermembrane side of the membrane. Cu cation-binding residues include histidine 186, cysteine 221, glutamate 223, cysteine 225, histidine 229, and methionine 232. Mg(2+) is bound at residue glutamate 223.

This sequence belongs to the cytochrome c oxidase subunit 2 family. As to quaternary structure, component of the cytochrome c oxidase (complex IV, CIV), a multisubunit enzyme composed of a catalytic core of 3 subunits and several supernumerary subunits. The complex exists as a monomer or a dimer and forms supercomplexes (SCs) in the inner mitochondrial membrane with ubiquinol-cytochrome c oxidoreductase (cytochrome b-c1 complex, complex III, CIII). Cu cation is required as a cofactor. In terms of processing, the signal sequence of COX2 is processed by IMP1.

The protein localises to the mitochondrion inner membrane. It catalyses the reaction 4 Fe(II)-[cytochrome c] + O2 + 8 H(+)(in) = 4 Fe(III)-[cytochrome c] + 2 H2O + 4 H(+)(out). Component of the cytochrome c oxidase, the last enzyme in the mitochondrial electron transport chain which drives oxidative phosphorylation. The respiratory chain contains 3 multisubunit complexes succinate dehydrogenase (complex II, CII), ubiquinol-cytochrome c oxidoreductase (cytochrome b-c1 complex, complex III, CIII) and cytochrome c oxidase (complex IV, CIV), that cooperate to transfer electrons derived from NADH and succinate to molecular oxygen, creating an electrochemical gradient over the inner membrane that drives transmembrane transport and the ATP synthase. Cytochrome c oxidase is the component of the respiratory chain that catalyzes the reduction of oxygen to water. Electrons originating from reduced cytochrome c in the intermembrane space (IMS) are transferred via the dinuclear copper A center (CU(A)) of subunit 2 and heme A of subunit 1 to the active site in subunit 1, a binuclear center (BNC) formed by heme A3 and copper B (CU(B)). The BNC reduces molecular oxygen to 2 water molecules using 4 electrons from cytochrome c in the IMS and 4 protons from the mitochondrial matrix. The protein is Cytochrome c oxidase subunit 2 (COX2) of Lachancea kluyveri (strain ATCC 58438 / CBS 3082 / BCRC 21498 / NBRC 1685 / JCM 7257 / NCYC 543 / NRRL Y-12651) (Yeast).